Consider the following 247-residue polypeptide: 3-deoxy-manno-octulosonate cytidylyltransferase (247 aa).

The protein belongs to the KdsB family.

It is found in the cytoplasm. The enzyme catalyses 3-deoxy-alpha-D-manno-oct-2-ulosonate + CTP = CMP-3-deoxy-beta-D-manno-octulosonate + diphosphate. Its pathway is nucleotide-sugar biosynthesis; CMP-3-deoxy-D-manno-octulosonate biosynthesis; CMP-3-deoxy-D-manno-octulosonate from 3-deoxy-D-manno-octulosonate and CTP: step 1/1. It participates in bacterial outer membrane biogenesis; lipopolysaccharide biosynthesis. Activates KDO (a required 8-carbon sugar) for incorporation into bacterial lipopolysaccharide in Gram-negative bacteria. The polypeptide is 3-deoxy-manno-octulosonate cytidylyltransferase (Chlorobium limicola (strain DSM 245 / NBRC 103803 / 6330)).